A 366-amino-acid chain; its full sequence is Ribosomal RNA large subunit methyltransferase M (366 aa).

S-adenosyl-L-methionine-binding positions include S188, 221–224, D240, D260, and D277; that span reads CPGG. K306 functions as the Proton acceptor in the catalytic mechanism.

This sequence belongs to the class I-like SAM-binding methyltransferase superfamily. RNA methyltransferase RlmE family. RlmM subfamily. As to quaternary structure, monomer.

Its subcellular location is the cytoplasm. It carries out the reaction cytidine(2498) in 23S rRNA + S-adenosyl-L-methionine = 2'-O-methylcytidine(2498) in 23S rRNA + S-adenosyl-L-homocysteine + H(+). Its function is as follows. Catalyzes the 2'-O-methylation at nucleotide C2498 in 23S rRNA. This Escherichia fergusonii (strain ATCC 35469 / DSM 13698 / CCUG 18766 / IAM 14443 / JCM 21226 / LMG 7866 / NBRC 102419 / NCTC 12128 / CDC 0568-73) protein is Ribosomal RNA large subunit methyltransferase M.